Reading from the N-terminus, the 288-residue chain is 4-diphosphocytidyl-2-C-methyl-D-erythritol kinase (288 aa).

Lysine 13 is an active-site residue. An ATP-binding site is contributed by 96 to 106 (PIGGGIGGGSS). Residue aspartate 138 is part of the active site.

Belongs to the GHMP kinase family. IspE subfamily.

The enzyme catalyses 4-CDP-2-C-methyl-D-erythritol + ATP = 4-CDP-2-C-methyl-D-erythritol 2-phosphate + ADP + H(+). Its pathway is isoprenoid biosynthesis; isopentenyl diphosphate biosynthesis via DXP pathway; isopentenyl diphosphate from 1-deoxy-D-xylulose 5-phosphate: step 3/6. Functionally, catalyzes the phosphorylation of the position 2 hydroxy group of 4-diphosphocytidyl-2C-methyl-D-erythritol. This chain is 4-diphosphocytidyl-2-C-methyl-D-erythritol kinase, found in Aliivibrio salmonicida (strain LFI1238) (Vibrio salmonicida (strain LFI1238)).